Reading from the N-terminus, the 132-residue chain is Small ribosomal subunit protein uS11 (132 aa).

The protein belongs to the universal ribosomal protein uS11 family. As to quaternary structure, part of the 30S ribosomal subunit. Interacts with proteins S7 and S18. Binds to IF-3.

Functionally, located on the platform of the 30S subunit, it bridges several disparate RNA helices of the 16S rRNA. Forms part of the Shine-Dalgarno cleft in the 70S ribosome. The sequence is that of Small ribosomal subunit protein uS11 from Chlamydia felis (strain Fe/C-56) (Chlamydophila felis).